Consider the following 135-residue polypeptide: ATP synthase epsilon chain 1 (135 aa).

This sequence belongs to the ATPase epsilon chain family. In terms of assembly, F-type ATPases have 2 components, CF(1) - the catalytic core - and CF(0) - the membrane proton channel. CF(1) has five subunits: alpha(3), beta(3), gamma(1), delta(1), epsilon(1). CF(0) has three main subunits: a, b and c.

It is found in the cell inner membrane. Produces ATP from ADP in the presence of a proton gradient across the membrane. The sequence is that of ATP synthase epsilon chain 1 from Nitrobacter hamburgensis (strain DSM 10229 / NCIMB 13809 / X14).